Here is a 152-residue protein sequence, read N- to C-terminus: MAEGEITTFTALTEKFNLPPGNYKKPKLLYCSNGGHFLRILPDGTVDGTRDRSDQHIQLQLSAESVGEVYIKSTETGQYLAMDTSGLLYGSQTPSEECLFLERLEENHYNTYTSKKHAEKNWFVGLKKNGSCKRGPRTHYGQKAILFLPLPV.

A2 carries the N-acetylalanine modification. Positions 2-15 (AEGEITTFTALTEK) are excised as a propeptide. Residue N33 participates in heparin binding. Residues 127–143 (KKNGSCKRGPRTHYGQK) form a heparin-binding region.

Belongs to the heparin-binding growth factors family. As to quaternary structure, monomer. Homodimer. Interacts with FGFR1, FGFR2, FGFR3 and FGFR4. Affinity between fibroblast growth factors (FGFs) and their receptors is increased by heparan sulfate glycosaminoglycans that function as coreceptors. Found in a complex with FGFBP1, FGF1 and FGF2. Interacts with FGFBP1. Part of a Cu(2+)-dependent multiprotein aggregate containing FGF1, S100A13 and SYT1. Interacts with SYT1. Interacts with S100A13. Interacts with LRRC59. Interacts with CSNKA, CSNKB and FIBP. While binding with LRRC59, CSNKA and FIBP seem mutually exclusive, CSNKB and FIBP may cooperatively interact with FGF1. Forms a ternary complex with FGFR1 and ITGAV:ITGB3 and induces the recruitment of PTPN11 to the complex. In terms of processing, in the nucleus, phosphorylated by PKC/PRKCD.

Its subcellular location is the secreted. The protein resides in the cytoplasm. It localises to the cell cortex. It is found in the cytosol. The protein localises to the nucleus. Plays an important role in the regulation of cell survival, cell division, angiogenesis, cell differentiation and cell migration. Functions as a potent mitogen in vitro. Acts as a ligand for FGFR1 and integrins. Binds to FGFR1 in the presence of heparin leading to FGFR1 dimerization and activation via sequential autophosphorylation on tyrosine residues which act as docking sites for interacting proteins, leading to the activation of several signaling cascades. Binds to integrin ITGAV:ITGB3. Its binding to integrin, subsequent ternary complex formation with integrin and FGFR1, and the recruitment of PTPN11 to the complex are essential for FGF1 signaling. Induces the phosphorylation and activation of FGFR1, FRS2, MAPK3/ERK1, MAPK1/ERK2 and AKT1. Can induce angiogenesis. The sequence is that of Fibroblast growth factor 1 (FGF1) from Sus scrofa (Pig).